The primary structure comprises 76 residues: Omega-conotoxin-like TeA61 (76 aa).

Positions 1-22 (MKLTCMMIVAVLFLTAWTFATA) are cleaved as a signal peptide. Positions 23-51 (DDSSNGLGNLFLKAHHEMKNPEASKLNER) are excised as a propeptide. 3 cysteine pairs are disulfide-bonded: C52–C67, C59–C70, and C66–C75.

This sequence belongs to the conotoxin O1 superfamily. Expressed by the venom duct.

It localises to the secreted. In terms of biological role, omega-conotoxins act at presynaptic membranes, they bind and block voltage-gated calcium channels (Cav). The polypeptide is Omega-conotoxin-like TeA61 (Conus textile (Cloth-of-gold cone)).